A 315-amino-acid chain; its full sequence is Probable cell division protein WhiA (315 aa).

The H-T-H motif DNA-binding region spans 280–313 (SLKELGEMLDPPVGKSGINHRLRKIEKIAEELRT).

This sequence belongs to the WhiA family.

Involved in cell division and chromosome segregation. This is Probable cell division protein WhiA from Clostridium beijerinckii (strain ATCC 51743 / NCIMB 8052) (Clostridium acetobutylicum).